Here is a 127-residue protein sequence, read N- to C-terminus: Holo-[acyl-carrier-protein] synthase (127 aa).

The Mg(2+) site is built by Asp-8 and Glu-60.

Belongs to the P-Pant transferase superfamily. AcpS family. Mg(2+) is required as a cofactor.

It is found in the cytoplasm. It catalyses the reaction apo-[ACP] + CoA = holo-[ACP] + adenosine 3',5'-bisphosphate + H(+). In terms of biological role, transfers the 4'-phosphopantetheine moiety from coenzyme A to a Ser of acyl-carrier-protein. This is Holo-[acyl-carrier-protein] synthase from Marinomonas sp. (strain MWYL1).